The following is a 246-amino-acid chain: 2,3-bisphosphoglycerate-dependent phosphoglycerate mutase (246 aa).

Substrate-binding positions include 8 to 15 (RHGQSQWN), 21 to 22 (TG), R60, 87 to 90 (EKHY), K98, 114 to 115 (RR), and 183 to 184 (GN). H9 functions as the Tele-phosphohistidine intermediate in the catalytic mechanism. E87 acts as the Proton donor/acceptor in catalysis.

It belongs to the phosphoglycerate mutase family. BPG-dependent PGAM subfamily. Homodimer.

The enzyme catalyses (2R)-2-phosphoglycerate = (2R)-3-phosphoglycerate. The protein operates within carbohydrate degradation; glycolysis; pyruvate from D-glyceraldehyde 3-phosphate: step 3/5. In terms of biological role, catalyzes the interconversion of 2-phosphoglycerate and 3-phosphoglycerate. This is 2,3-bisphosphoglycerate-dependent phosphoglycerate mutase from Dichelobacter nodosus (strain VCS1703A).